Consider the following 345-residue polypeptide: 3'-5' exoribonuclease 1 (345 aa).

Composition is skewed to basic and acidic residues over residues 1–11 (MEDERGREHGG) and 19–40 (PRPE…CRLD). A disordered region spans residues 1 to 40 (MEDERGREHGGDAAQQKTPRPECEESRPLSVEKKQRCRLD). At Ser-58 the chain carries Phosphoserine. Residues 72–106 (INRMSKEELRAKLSEFKLETRGVKDVLKKRLKNYY) form the SAP domain. In terms of domain architecture, Exonuclease spans 126–302 (ICIIDFEATC…DDSKNIARIA (177 aa)). The Mg(2+) site is built by Asp-130 and Glu-132. The Proton acceptor role is filled by Glu-132. The AMP site is built by Glu-132 and Ala-133. Position 230 (Asp-230) interacts with Mg(2+). His-289 acts as the Proton acceptor in catalysis. Residue His-289 participates in AMP binding. Asp-294 is a Mg(2+) binding site.

Identified in a histone pre-mRNA complex, at least composed of ERI1, LSM11, SLBP, SNRPB, SYNCRIP and YBX1. Binds to 40S and 60S ribosomal subunits and to 80S assembled ribosomes. Interacts in a cooperative manner with SLBP to the mature 3'-end of histone mRNAs. Found in a ternary complex with SLBP and the stem-loop structure of the 3'-end of histone mRNAs. Mg(2+) is required as a cofactor.

The protein resides in the cytoplasm. The protein localises to the nucleus. It localises to the nucleolus. It catalyses the reaction Exonucleolytic cleavage in the 3'- to 5'-direction to yield nucleoside 5'-phosphates.. Although it can bind simultaneously with SLBP to the 3'-end of histone mRNA, the presence of SLBP prevents the exonuclease activity. Functionally, RNA exonuclease that binds to the 3'-end of histone mRNAs and degrades them, suggesting that it plays an essential role in histone mRNA decay after replication. A 2' and 3'-hydroxyl groups at the last nucleotide of the histone 3'-end is required for efficient 3'-end histone mRNA exonuclease activity and degradation of RNA substrates. Also able to degrade the 3'-overhangs of short interfering RNAs (siRNAs) in vitro, suggesting a possible role as regulator of RNA interference (RNAi). Required for binding the 5'-ACCCA-3' sequence present in stem-loop structure. Able to bind other mRNAs. Required for 5.8S rRNA 3'-end processing. Also binds to 5.8s ribosomal RNA. Binds with high affinity to the stem-loop structure of replication-dependent histone pre-mRNAs. In vitro, does not have sequence specificity. In vitro, has weak DNA exonuclease activity. In vitro, shows biphasic kinetics such that there is rapid hydrolysis of the last three unpaired RNA nucleotides in the 39 flanking sequence followed by a much slower cleavage through the stem that occurs over a longer incubation period in the order of hours. ERI1-mediated RNA metabolism plays a key role in chondrogenesis. This chain is 3'-5' exoribonuclease 1 (Eri1), found in Rattus norvegicus (Rat).